Consider the following 473-residue polypeptide: Photosystem II CP43 reaction center protein (473 aa).

The propeptide occupies 1 to 14; the sequence is MKTLYSLRRFYHVE. At T15 the chain carries N-acetylthreonine. T15 is subject to Phosphothreonine. 5 helical membrane passes run 69-93, 134-155, 178-200, 255-275, and 291-312; these read LFEVAHFVPEKPMYEQGLILLPHLA, LLGPETLEESFPFFGYVWKDRN, KALYFGGVYDTWAPGGGDVRKIT, KPFAWARRALVWSGEAYLSYS, and WFNNTAYPSEFYGPTGPEASQA. E367 provides a ligand contact to [CaMn4O5] cluster. The chain crosses the membrane as a helical span at residues 447–471; the sequence is RARAAAAGFEKGIDRDLEPVLFMTP.

This sequence belongs to the PsbB/PsbC family. PsbC subfamily. PSII is composed of 1 copy each of membrane proteins PsbA, PsbB, PsbC, PsbD, PsbE, PsbF, PsbH, PsbI, PsbJ, PsbK, PsbL, PsbM, PsbT, PsbX, PsbY, PsbZ, Psb30/Ycf12, at least 3 peripheral proteins of the oxygen-evolving complex and a large number of cofactors. It forms dimeric complexes. Binds multiple chlorophylls and provides some of the ligands for the Ca-4Mn-5O cluster of the oxygen-evolving complex. It may also provide a ligand for a Cl- that is required for oxygen evolution. PSII binds additional chlorophylls, carotenoids and specific lipids. serves as cofactor.

It is found in the plastid. Its subcellular location is the chloroplast thylakoid membrane. Its function is as follows. One of the components of the core complex of photosystem II (PSII). It binds chlorophyll and helps catalyze the primary light-induced photochemical processes of PSII. PSII is a light-driven water:plastoquinone oxidoreductase, using light energy to abstract electrons from H(2)O, generating O(2) and a proton gradient subsequently used for ATP formation. The polypeptide is Photosystem II CP43 reaction center protein (Carica papaya (Papaya)).